The following is a 487-amino-acid chain: Betaine aldehyde dehydrogenase (487 aa).

Ile-27 and Asp-93 together coordinate K(+). 149–151 (GAW) is an NAD(+) binding site. Lys-161 functions as the Charge relay system in the catalytic mechanism. Residues 175–178 (KPSE) and 228–231 (SVPT) each bind NAD(+). Position 243 (Leu-243) interacts with K(+). Glu-249 functions as the Proton acceptor in the catalytic mechanism. NAD(+) contacts are provided by Gly-251, Cys-283, and Glu-384. The Nucleophile role is filled by Cys-283. Position 283 is a cysteine sulfenic acid (-SOH) (Cys-283). 2 residues coordinate K(+): Lys-454 and Gly-457. Residue Glu-461 is the Charge relay system of the active site.

It belongs to the aldehyde dehydrogenase family. Dimer of dimers. The cofactor is K(+).

It carries out the reaction betaine aldehyde + NAD(+) + H2O = glycine betaine + NADH + 2 H(+). It functions in the pathway amine and polyamine biosynthesis; betaine biosynthesis via choline pathway; betaine from betaine aldehyde: step 1/1. Functionally, involved in the biosynthesis of the osmoprotectant glycine betaine. Catalyzes the irreversible oxidation of betaine aldehyde to the corresponding acid. The chain is Betaine aldehyde dehydrogenase from Brucella abortus (strain S19).